The sequence spans 198 residues: Large ribosomal subunit protein bL9 (198 aa).

Belongs to the bacterial ribosomal protein bL9 family.

Functionally, binds to the 23S rRNA. In Bartonella tribocorum (strain CIP 105476 / IBS 506), this protein is Large ribosomal subunit protein bL9.